A 262-amino-acid polypeptide reads, in one-letter code: MASLNQEQLKILEQTRQRLLHLTQSLGSLSNSINQSDPLPPWSSLQSQATIISNNLLSISHLLTEHQELLSSIVAYPTPNFPGRTESTILHQLMRTKLEPRVEEWVARGRNVARHNTASSQIRAQQGAAAEGETVRLSVDELLDLWHWAPIAANMEARRRDWGGDYTLEEKEMGVKNVITGLKRQLDEGDEEDEEEEEEEEDMQGEEMEVVVGAHTKAGGGSGVEFDIARGSSHIPSKPVAPGMPLDDIFRFMMTGAPPRPR.

Positions leucine 168 to valine 211 form a coiled coil. The tract at residues lysine 183–glutamate 206 is disordered. The segment covering glutamate 188–glutamate 206 has biased composition (acidic residues).

The protein belongs to the Mediator complex subunit 8 family. As to quaternary structure, component of the Mediator complex.

Its subcellular location is the nucleus. In terms of biological role, component of the Mediator complex, a coactivator involved in the regulated transcription of nearly all RNA polymerase II-dependent genes. Mediator functions as a bridge to convey information from gene-specific regulatory proteins to the basal RNA polymerase II transcription machinery. Mediator is recruited to promoters by direct interactions with regulatory proteins and serves as a scaffold for the assembly of a functional preinitiation complex with RNA polymerase II and the general transcription factors. This chain is Mediator of RNA polymerase II transcription subunit 8 (MED8), found in Coccidioides immitis (strain RS) (Valley fever fungus).